Here is a 366-residue protein sequence, read N- to C-terminus: Class I histocompatibility antigen, Gogo-C*0202 alpha chain (366 aa).

The signal sequence occupies residues 1-24 (MRVMAPRTLILLLSGALALTETWA). Positions 25-114 (GSHSMRYFYT…LRGYYNQSED (90 aa)) are alpha-1. The Extracellular segment spans residues 25–308 (GSHSMRYFYT…EPSSQPTIPI (284 aa)). Asn110 is a glycosylation site (N-linked (GlcNAc...) asparagine). The segment at 115–206 (GSHTLQSMYG…ENGKETLQRA (92 aa)) is alpha-2. Disulfide bonds link Cys125/Cys188 and Cys227/Cys283. The alpha-3 stretch occupies residues 207–298 (EPPKTHVTHH…GLPEPLTLRW (92 aa)). The 89-residue stretch at 209 to 297 (PKTHVTHHPL…EGLPEPLTLR (89 aa)) folds into the Ig-like C1-type domain. The tract at residues 299 to 308 (EPSSQPTIPI) is connecting peptide. The chain crosses the membrane as a helical span at residues 309–332 (VGIVVGLAVLVVLAVLGAVVTAMM). Residues 333-366 (CRRKSSGGKGGSCSQAACSNSAQGSDESLITCKA) lie on the Cytoplasmic side of the membrane.

This sequence belongs to the MHC class I family. In terms of assembly, heterodimer of an alpha chain and a beta chain (beta-2-microglobulin).

It is found in the membrane. Involved in the presentation of foreign antigens to the immune system. The polypeptide is Class I histocompatibility antigen, Gogo-C*0202 alpha chain (Gorilla gorilla gorilla (Western lowland gorilla)).